We begin with the raw amino-acid sequence, 169 residues long: Cell division inhibitor SulA (169 aa).

The tract at residues 106 to 112 is ftsZ binding; the sequence is ALRTGNY. The tract at residues 162–169 is lon protease binding; sequence KIHSNLYH.

It belongs to the SulA family. As to quaternary structure, interacts with FtsZ. Is rapidly cleaved and degraded by the Lon protease once DNA damage is repaired.

Its function is as follows. Component of the SOS system and an inhibitor of cell division. Accumulation of SulA causes rapid cessation of cell division and the appearance of long, non-septate filaments. In the presence of GTP, binds a polymerization-competent form of FtsZ in a 1:1 ratio, thus inhibiting FtsZ polymerization and therefore preventing it from participating in the assembly of the Z ring. This mechanism prevents the premature segregation of damaged DNA to daughter cells during cell division. In Shigella flexneri serotype 5b (strain 8401), this protein is Cell division inhibitor SulA.